Here is a 168-residue protein sequence, read N- to C-terminus: Ribosome maturation factor RimM (168 aa).

One can recognise a PRC barrel domain in the interval 92 to 166; sequence EDTFYKADLI…RITVDPIEGM (75 aa).

This sequence belongs to the RimM family. In terms of assembly, binds ribosomal protein uS19.

It localises to the cytoplasm. Functionally, an accessory protein needed during the final step in the assembly of 30S ribosomal subunit, possibly for assembly of the head region. Essential for efficient processing of 16S rRNA. May be needed both before and after RbfA during the maturation of 16S rRNA. It has affinity for free ribosomal 30S subunits but not for 70S ribosomes. This Alkaliphilus metalliredigens (strain QYMF) protein is Ribosome maturation factor RimM.